Reading from the N-terminus, the 397-residue chain is Tryptophan synthase beta chain (397 aa).

Lys-91 is subject to N6-(pyridoxal phosphate)lysine.

Belongs to the TrpB family. In terms of assembly, tetramer of two alpha and two beta chains. Pyridoxal 5'-phosphate serves as cofactor.

The enzyme catalyses (1S,2R)-1-C-(indol-3-yl)glycerol 3-phosphate + L-serine = D-glyceraldehyde 3-phosphate + L-tryptophan + H2O. Its pathway is amino-acid biosynthesis; L-tryptophan biosynthesis; L-tryptophan from chorismate: step 5/5. Functionally, the beta subunit is responsible for the synthesis of L-tryptophan from indole and L-serine. This chain is Tryptophan synthase beta chain, found in Bacillus cereus (strain ATCC 14579 / DSM 31 / CCUG 7414 / JCM 2152 / NBRC 15305 / NCIMB 9373 / NCTC 2599 / NRRL B-3711).